The chain runs to 534 residues: Probable alkaline/neutral invertase D (534 aa).

Residues serine 7 and serine 37 each carry the phosphoserine modification. The residue at position 55 (threonine 55) is a Phosphothreonine. Serine 532 bears the Phosphoserine mark.

It belongs to the glycosyl hydrolase 100 family.

It catalyses the reaction Hydrolysis of terminal non-reducing beta-D-fructofuranoside residues in beta-D-fructofuranosides.. In terms of biological role, invertase that cleaves sucrose into glucose and fructose. This chain is Probable alkaline/neutral invertase D, found in Arabidopsis thaliana (Mouse-ear cress).